The following is a 398-amino-acid chain: Lipase member K (398 aa).

An N-terminal signal peptide occupies residues 1 to 19; the sequence is MWWLLATTCCVLLSGPIDG. In terms of domain architecture, AB hydrolase-1 spans 78 to 377; sequence VVYLQHGLIA…HYNHMDFYLG (300 aa). The Nucleophile role is filled by Ser171. Cys245 and Cys254 are oxidised to a cystine. 2 N-linked (GlcNAc...) asparagine glycosylation sites follow: Asn270 and Asn326. Active-site charge relay system residues include Asp342 and His371.

It belongs to the AB hydrolase superfamily. Lipase family.

The protein resides in the secreted. Functionally, plays a highly specific role in the last step of keratinocyte differentiation. May have an essential function in lipid metabolism of the most differentiated epidermal layers. This Mus musculus (Mouse) protein is Lipase member K (Lipk).